Consider the following 279-residue polypeptide: Protoheme IX farnesyltransferase (279 aa).

The next 9 helical transmembrane spans lie at 5–25 (LILLKPRVIWLLILASLAGYL), 33–53 (IAQAFSLLLVAFLSTGGAAAF), 84–103 (LAYSLVLSALGIALGFLLLG), 108–125 (LFVFLGWFFYAVVYTVIL), 133–153 (ILGGGFAGNATFLGGYALGAG), 159–179 (AVLISFAIYLWIPSHIWALAY), 201–221 (AAVAIISLLNLASAAYIMTLY), 222–242 (LAFGGGLLGGALVAAGVVATI), and 256–276 (AMWKMYKASSPVLTLFLLALI).

Belongs to the UbiA prenyltransferase family. Protoheme IX farnesyltransferase subfamily.

The protein resides in the cell membrane. The enzyme catalyses heme b + (2E,6E)-farnesyl diphosphate + H2O = Fe(II)-heme o + diphosphate. It functions in the pathway porphyrin-containing compound metabolism; heme O biosynthesis; heme O from protoheme: step 1/1. Its function is as follows. Converts heme B (protoheme IX) to heme O by substitution of the vinyl group on carbon 2 of heme B porphyrin ring with a hydroxyethyl farnesyl side group. This is Protoheme IX farnesyltransferase from Pyrobaculum arsenaticum (strain DSM 13514 / JCM 11321 / PZ6).